Reading from the N-terminus, the 341-residue chain is MHIVLEFFLVTFKVLWAFVLAAAKWLVRPKDKSVAGQVCLITGAGSGLGRLFALEFARRRAQLVLWDINSQSNEETAEMVRSIYRELEAEDSARRAGNATEEEVQPCCNFQVYTYTCDVGKRESVYSTAERVRREVGDVYLLLNNAGVVSGHHLLECPDELIERTMMVNCHAHFWTTKAFLPKMMEMNHGHIVSVASSLGLFSTAGVEDYCASKFGVVGFHESLSHELKAADKDGIKTTLVCPYLVDTGMFRGCRIRKEIEPFLPPLKPDYCVKQAMRAILTDQPMICTPRLMYIVTCMKSILPFEAVVCMYRFLGADKCMYPFIAQRKQATNNNEAKNGI.

Residues 3-23 traverse the membrane as a helical; Signal-anchor segment; that stretch reads IVLEFFLVTFKVLWAFVLAAA. Position 40 to 64 (40 to 64) interacts with NADP(+); sequence LITGAGSGLGRLFALEFARRRAQLV. Serine 197 provides a ligand contact to substrate. Tyrosine 210 (proton acceptor) is an active-site residue.

Belongs to the short-chain dehydrogenases/reductases (SDR) family.

Its subcellular location is the microsome membrane. It localises to the endoplasmic reticulum membrane. The catalysed reaction is all-trans-retinol + NADP(+) = all-trans-retinal + NADPH + H(+). The protein operates within cofactor metabolism; retinol metabolism. Retinol dehydrogenase with a clear preference for NADP. Converts all-trans-retinol to all-trans-retinal. Has no detectable activity towards 11-cis-retinol, 9-cis-retinol and 13-cis-retinol. This Xenopus tropicalis (Western clawed frog) protein is Retinol dehydrogenase 10 (rdh10).